A 339-amino-acid chain; its full sequence is MRVYYDRDADLNLIKGKKVAIVGYGSQGHAHALNLKDSGVKEVAIALRKDSSSVKKAEAAGFKVMDVAEAAKWADLVMMLTPDELQGDIYREHLHDNMKKGAALVFAHGLNVHFNLLDPRADLDVLMIAPKGPGHTVRSEYQRGGGVPCLIAIAKDVSGNAHDLGLSYASAVGGGRAGIIETTFKEECETDLFGEQVVLCGGLVELIKGGYETLVEAGYAPEMAYFECLHEVKLIVDLIYEGGIANMNYSISNTAEYGEYVTGPRIVTAETKAEMKRVLADIQGGKFARDWMLENKVNQTSFKATRAKLAAHPIEEVGAKLRDMMPWIKKGALVDKSKN.

One can recognise a KARI N-terminal Rossmann domain in the interval 1-182 (MRVYYDRDAD…GGGRAGIIET (182 aa)). NADP(+) is bound by residues 24-27 (YGSQ), Arg48, Ser51, Ser53, and 83-86 (DELQ). His108 is an active-site residue. Gly134 is an NADP(+) binding site. Residues 183-328 (TFKEECETDL…AKLRDMMPWI (146 aa)) enclose the KARI C-terminal knotted domain. 4 residues coordinate Mg(2+): Asp191, Glu195, Glu227, and Glu231. Ser252 is a substrate binding site.

Belongs to the ketol-acid reductoisomerase family. Mg(2+) serves as cofactor.

The catalysed reaction is (2R)-2,3-dihydroxy-3-methylbutanoate + NADP(+) = (2S)-2-acetolactate + NADPH + H(+). It catalyses the reaction (2R,3R)-2,3-dihydroxy-3-methylpentanoate + NADP(+) = (S)-2-ethyl-2-hydroxy-3-oxobutanoate + NADPH + H(+). The protein operates within amino-acid biosynthesis; L-isoleucine biosynthesis; L-isoleucine from 2-oxobutanoate: step 2/4. It participates in amino-acid biosynthesis; L-valine biosynthesis; L-valine from pyruvate: step 2/4. Involved in the biosynthesis of branched-chain amino acids (BCAA). Catalyzes an alkyl-migration followed by a ketol-acid reduction of (S)-2-acetolactate (S2AL) to yield (R)-2,3-dihydroxy-isovalerate. In the isomerase reaction, S2AL is rearranged via a Mg-dependent methyl migration to produce 3-hydroxy-3-methyl-2-ketobutyrate (HMKB). In the reductase reaction, this 2-ketoacid undergoes a metal-dependent reduction by NADPH to yield (R)-2,3-dihydroxy-isovalerate. The polypeptide is Ketol-acid reductoisomerase (NADP(+)) (Bradyrhizobium diazoefficiens (strain JCM 10833 / BCRC 13528 / IAM 13628 / NBRC 14792 / USDA 110)).